The chain runs to 146 residues: MHPLLNPLLLALGLMALLLTTVIALTCLGGFASPGPVPPSTALRELIEELVNITQNQKAPLCNGSMVWSINLTAGMYCAALESLINVSGCSAIEKTQRMLSGFCPHKVSAGQFSSLHVRDTKIEVAQFVKDLLLHLKKLFREGQFN.

The signal sequence occupies residues 1-24; the sequence is MHPLLNPLLLALGLMALLLTTVIA. Residues asparagine 52, asparagine 63, asparagine 71, and asparagine 86 are each glycosylated (N-linked (GlcNAc...) asparagine). 2 disulfide bridges follow: cysteine 62/cysteine 90 and cysteine 78/cysteine 104.

It belongs to the IL-4/IL-13 family. Interacts with IL13RA2.

The protein resides in the secreted. In terms of biological role, cytokine that plays important roles in allergic inflammation and immune response to parasite infection. Synergizes with IL2 in regulating interferon-gamma synthesis. Stimulates B-cell proliferation, and activation of eosinophils, basophils, and mast cells. Plays an important role in controlling IL33 activity by modulating the production of transmembrane and soluble forms of interleukin-1 receptor-like 1/IL1RL1. Displays the capacity to antagonize Th1-driven proinflammatory immune response and downregulates synthesis of many proinflammatory cytokines including IL1, IL6, IL10, IL12 and TNF-alpha through a mechanism that partially involves suppression of NF-kappa-B. Also functions on nonhematopoietic cells, including endothelial cells where it induces vascular cell adhesion protein 1/VCAM1, which is important in the recruitment of eosinophils. Exerts its biological effects through its receptors which comprises the IL4R chain and the IL13RA1 chain, to activate JAK1 and TYK2, leading to the activation of STAT6. Aside from IL13RA1, another receptor IL13RA2 acts as a high affinity decoy for IL13 and mediates internalization and depletion of extracellular IL13. The protein is Interleukin-13 (IL13) of Homo sapiens (Human).